We begin with the raw amino-acid sequence, 143 residues long: Large ribosomal subunit protein uL15 (143 aa).

A disordered region spans residues 1-54 (MELNSIKPAEGAKHAKRRVGRGIGSGLGKTAGRGHKGQKSRSGGYHKVGFEGGQ). Positions 21 to 31 (RGIGSGLGKTA) are enriched in gly residues.

It belongs to the universal ribosomal protein uL15 family. In terms of assembly, part of the 50S ribosomal subunit.

In terms of biological role, binds to the 23S rRNA. The protein is Large ribosomal subunit protein uL15 of Paracidovorax citrulli (strain AAC00-1) (Acidovorax citrulli).